Here is a 2392-residue protein sequence, read N- to C-terminus: Protein Ycf2 (2392 aa).

1658–1665 is a binding site for ATP; sequence GPTEIGKS.

It belongs to the Ycf2 family.

The protein resides in the plastid. It localises to the chloroplast stroma. Functionally, probable ATPase of unknown function. Its presence in a non-photosynthetic plant (Epifagus virginiana) and experiments in tobacco indicate that it has an essential function which is probably not related to photosynthesis. The sequence is that of Protein Ycf2 from Anthoceros angustus (Hornwort).